The primary structure comprises 541 residues: Chaperonin GroEL (541 aa).

ATP-binding positions include 29–32 (TLGP), 86–90 (DGTTT), Gly-413, 478–480 (DAL), and Asp-494.

This sequence belongs to the chaperonin (HSP60) family. In terms of assembly, forms a cylinder of 14 subunits composed of two heptameric rings stacked back-to-back. Interacts with the co-chaperonin GroES.

Its subcellular location is the cytoplasm. It carries out the reaction ATP + H2O + a folded polypeptide = ADP + phosphate + an unfolded polypeptide.. Functionally, together with its co-chaperonin GroES, plays an essential role in assisting protein folding. The GroEL-GroES system forms a nano-cage that allows encapsulation of the non-native substrate proteins and provides a physical environment optimized to promote and accelerate protein folding. The polypeptide is Chaperonin GroEL (Alkaliphilus oremlandii (strain OhILAs) (Clostridium oremlandii (strain OhILAs))).